The primary structure comprises 211 residues: Putative ankyrin repeat protein R810 (211 aa).

5 ANK repeats span residues 31 to 61, 72 to 101, 103 to 131, 133 to 162, and 163 to 191; these read TKFI…NLKY, NIND…DICA, QNSP…KFFG, YSSA…FCLE, and MEIA…SYFD.

In Acanthamoeba polyphaga mimivirus (APMV), this protein is Putative ankyrin repeat protein R810.